The following is a 504-amino-acid chain: Protein psiD (504 aa).

A signal peptide spans 1 to 21 (MKYSYLLLILLLSNLYKEGFS). 6 N-linked (GlcNAc...) asparagine glycosylation sites follow: asparagine 87, asparagine 136, asparagine 236, asparagine 252, asparagine 290, and asparagine 373. In terms of domain architecture, PA14 spans 111-251 (LTRVGDSTYA…YDACGVCDGH (141 aa)). Positions 417-430 (TVTPTVTPTVTPTP) are enriched in low complexity. The disordered stretch occupies residues 417-453 (TVTPTVTPTVTPTPTTTPTPSPTTVPPRPTPTPLPAD). Residues 431–453 (TTTPTPSPTTVPPRPTPTPLPAD) show a composition bias toward pro residues. Asparagine 483 is a glycosylation site (N-linked (GlcNAc...) asparagine).

This sequence belongs to the prespore-cell-inducing factor family.

Its subcellular location is the secreted. This Dictyostelium discoideum (Social amoeba) protein is Protein psiD (psiD).